Reading from the N-terminus, the 599-residue chain is UvrABC system protein C (599 aa).

Residues 18-96 (QLPGVYRMLG…IKQHRPPYNI (79 aa)) form the GIY-YIG domain. The 36-residue stretch at 207–242 (KELNQELIAKMEEAAEQLAFEKAMFYRDRLGLLREV) folds into the UVR domain.

The protein belongs to the UvrC family. As to quaternary structure, interacts with UvrB in an incision complex.

The protein resides in the cytoplasm. Its function is as follows. The UvrABC repair system catalyzes the recognition and processing of DNA lesions. UvrC both incises the 5' and 3' sides of the lesion. The N-terminal half is responsible for the 3' incision and the C-terminal half is responsible for the 5' incision. The polypeptide is UvrABC system protein C (Acinetobacter baylyi (strain ATCC 33305 / BD413 / ADP1)).